The sequence spans 420 residues: Glucose-1-phosphate adenylyltransferase (420 aa).

Alpha-D-glucose 1-phosphate contacts are provided by residues tyrosine 107, glycine 172, 187–188, and serine 205; that span reads EK.

The protein belongs to the bacterial/plant glucose-1-phosphate adenylyltransferase family. Homotetramer.

It catalyses the reaction alpha-D-glucose 1-phosphate + ATP + H(+) = ADP-alpha-D-glucose + diphosphate. The protein operates within glycan biosynthesis; glycogen biosynthesis. In terms of biological role, involved in the biosynthesis of ADP-glucose, a building block required for the elongation reactions to produce glycogen. Catalyzes the reaction between ATP and alpha-D-glucose 1-phosphate (G1P) to produce pyrophosphate and ADP-Glc. This is Glucose-1-phosphate adenylyltransferase from Rhizobium rhizogenes (strain K84 / ATCC BAA-868) (Agrobacterium radiobacter).